Reading from the N-terminus, the 558-residue chain is MDFFKKEILDWSIYLSLHYIARVFSNFSTSHIIQDYNLVRTYEKVDKTIVDFLSRLPNLFHILEYGENILHIYSMDDANTNIIIFFLDRVLNINKNGSFIHNLRLSSSINIKEYVYQLVNNDHPDNRIRLMLENGRRTRHFLSYISDTVNIYICILINHGFYIDAEDSYGCTLLHRCIYHYKKSESESYNELIKILLNNGSDVDKKDTYGNTPFILLCKHDINNVELFEICLENANIDSVDFNRYTPLHYVSCRNKYDFVKLLISKGANVNARNRFGTTPFYCGIIHGISLIKLYLESDTELEIDNEHIVRHLIIFDAVESLDYLLSRGVIDINYRTIYNETSIYDAVSYNAYNTLVYLLNRNGDFETITTSGCTCISEAVANNNKIIMEVLLSKRPSLKIMIQSMIAITKHKQHNADLLKMCIKYTACMTDYDTLIDVQSLQQYKWYILKCFDEIDIMKRCYIKNKTVFQLVFCIKDINTLMRYGKHPSFVKCTSLDVYGSRVRNIIASIRYRQRLISLLSKKLDPGDKWSCFPNEIKYKILENFNDNELSTYLKIL.

ANK repeat units lie at residues 65-95 (YGEN…NINK), 169-205 (YGCT…DVDK), 209-239 (YGNT…NIDS), 243-272 (NRYT…NVNA), 276-304 (FGTT…ELEI), 339-368 (YNET…DFET), and 372-401 (SGCT…SLKI).

This sequence belongs to the orthopoxvirus OPG189 protein family.

Functionally, contributes to viral release without involving rearrangement of host actin. The sequence is that of Ankyrin repeat protein OPG189 (OPG189) from Vaccinia virus (strain Western Reserve) (VACV).